A 341-amino-acid polypeptide reads, in one-letter code: tRNA N6-adenosine threonylcarbamoyltransferase (341 aa).

Fe cation-binding residues include histidine 112 and histidine 116. Residues 134–138, aspartate 167, glycine 180, and asparagine 279 contribute to the substrate site; that span reads LASGG. Position 307 (aspartate 307) interacts with Fe cation.

This sequence belongs to the KAE1 / TsaD family. The cofactor is Fe(2+).

The protein localises to the cytoplasm. The catalysed reaction is L-threonylcarbamoyladenylate + adenosine(37) in tRNA = N(6)-L-threonylcarbamoyladenosine(37) in tRNA + AMP + H(+). In terms of biological role, required for the formation of a threonylcarbamoyl group on adenosine at position 37 (t(6)A37) in tRNAs that read codons beginning with adenine. Is involved in the transfer of the threonylcarbamoyl moiety of threonylcarbamoyl-AMP (TC-AMP) to the N6 group of A37, together with TsaE and TsaB. TsaD likely plays a direct catalytic role in this reaction. This chain is tRNA N6-adenosine threonylcarbamoyltransferase, found in Rickettsia bellii (strain OSU 85-389).